Consider the following 437-residue polypeptide: tRNA(Ile)-lysidine synthase (437 aa).

22 to 27 (SGGLDS) is an ATP binding site.

The protein belongs to the tRNA(Ile)-lysidine synthase family.

It localises to the cytoplasm. The enzyme catalyses cytidine(34) in tRNA(Ile2) + L-lysine + ATP = lysidine(34) in tRNA(Ile2) + AMP + diphosphate + H(+). In terms of biological role, ligates lysine onto the cytidine present at position 34 of the AUA codon-specific tRNA(Ile) that contains the anticodon CAU, in an ATP-dependent manner. Cytidine is converted to lysidine, thus changing the amino acid specificity of the tRNA from methionine to isoleucine. In Xylella fastidiosa (strain 9a5c), this protein is tRNA(Ile)-lysidine synthase.